A 907-amino-acid chain; its full sequence is HMG box transcription factor BBX (907 aa).

Over residues 1-19 (MKGSNRNKDHSTEGEGDGK) the composition is skewed to basic and acidic residues. Disordered stretches follow at residues 1–24 (MKGS…PKRK), 37–80 (LDFS…EQRA), 152–185 (TTNK…PTPK), and 220–242 (TPEA…RQKS). 2 stretches are compositionally biased toward acidic residues: residues 39–52 (FSEE…EEDI) and 61–75 (DGLE…DDES). Positions 80-148 (ARRPMNAFLL…AFMKANPGYR (69 aa)) form a DNA-binding region, HMG box. Residues 152–164 (TTNKPVKSPTPTV) show a composition bias toward polar residues. At serine 242 the chain carries Phosphoserine. A Glycyl lysine isopeptide (Lys-Gly) (interchain with G-Cter in SUMO2) cross-link involves residue lysine 384. Disordered regions lie at residues 435–483 (IIED…DIES), 495–612 (DWGV…SERS), and 628–672 (TSLR…KKFK). Over residues 447-457 (KIKKKKKKNKL) the composition is skewed to basic residues. Phosphoserine is present on residues serine 476 and serine 483. 2 stretches are compositionally biased toward basic and acidic residues: residues 496–506 (WGVDKLGETPR) and 534–550 (KKVS…ESRP). A Glycyl lysine isopeptide (Lys-Gly) (interchain with G-Cter in SUMO2) cross-link involves residue lysine 571. Basic and acidic residues predominate over residues 591–612 (KPEDSDCHRKTETCGSRKSERS). Over residues 656-668 (ESWTFNQSGTSGS) the composition is skewed to polar residues. Lysine 693 is covalently cross-linked (Glycyl lysine isopeptide (Lys-Gly) (interchain with G-Cter in SUMO2)). The residue at position 701 (serine 701) is a Phosphoserine. Disordered stretches follow at residues 708–736 (KCVS…SGDK), 769–854 (NALS…SSTP), and 877–907 (VHRG…CADQ). Low complexity predominate over residues 723–732 (SSESTKTSKG). A compositionally biased stretch (polar residues) spans 772-783 (SIPNTPEPTTMQ). Serine 789 is modified (phosphoserine). A compositionally biased stretch (basic residues) spans 790–801 (QKRKARKTKITH). Serine 811 is subject to Phosphoserine.

Its subcellular location is the nucleus. Transcription factor that is necessary for cell cycle progression from G1 to S phase. In Mus musculus (Mouse), this protein is HMG box transcription factor BBX (Bbx).